The following is a 379-amino-acid chain: Deoxyhypusine synthase (379 aa).

NAD(+)-binding positions include S104 to S108, T130 to G132, E136, and D237. E135–E136 contributes to the spermidine binding site. Position 242 (D242) interacts with spermidine. G293 lines the NAD(+) pocket. H298 is a binding site for spermidine. Position 318-319 (T318–A319) interacts with NAD(+). Spermidine is bound by residues G324–D326 and E333–K339. The active-site Nucleophile is K339. D352 to A353 lines the NAD(+) pocket.

This sequence belongs to the deoxyhypusine synthase family. In terms of assembly, homotetramer. NAD(+) serves as cofactor.

It catalyses the reaction [eIF5A protein]-L-lysine + spermidine = [eIF5A protein]-deoxyhypusine + propane-1,3-diamine. Its pathway is protein modification; eIF5A hypusination. In terms of biological role, catalyzes the NAD-dependent oxidative cleavage of spermidine and the subsequent transfer of the butylamine moiety of spermidine to the epsilon-amino group of a specific lysine residue of the eIF-5A precursor protein to form the intermediate deoxyhypusine residue. Also able to produce homospermidine from putrescine. The chain is Deoxyhypusine synthase (DHS1) from Nicotiana tabacum (Common tobacco).